The primary structure comprises 603 residues: Glutamyl-tRNA(Gln) amidotransferase subunit E (603 aa).

This sequence belongs to the GatB/GatE family. GatE subfamily. In terms of assembly, heterodimer of GatD and GatE.

It catalyses the reaction L-glutamyl-tRNA(Gln) + L-glutamine + ATP + H2O = L-glutaminyl-tRNA(Gln) + L-glutamate + ADP + phosphate + H(+). In terms of biological role, allows the formation of correctly charged Gln-tRNA(Gln) through the transamidation of misacylated Glu-tRNA(Gln) in organisms which lack glutaminyl-tRNA synthetase. The reaction takes place in the presence of glutamine and ATP through an activated gamma-phospho-Glu-tRNA(Gln). The GatDE system is specific for glutamate and does not act on aspartate. This Thermoplasma acidophilum (strain ATCC 25905 / DSM 1728 / JCM 9062 / NBRC 15155 / AMRC-C165) protein is Glutamyl-tRNA(Gln) amidotransferase subunit E.